Here is a 345-residue protein sequence, read N- to C-terminus: Ferredoxin--NADP reductase (345 aa).

FAD-binding residues include Asp38, Gln46, Tyr51, Val91, Phe129, Asp295, and Thr336.

Belongs to the ferredoxin--NADP reductase type 2 family. Homodimer. FAD is required as a cofactor.

It catalyses the reaction 2 reduced [2Fe-2S]-[ferredoxin] + NADP(+) + H(+) = 2 oxidized [2Fe-2S]-[ferredoxin] + NADPH. In Rhodospirillum rubrum (strain ATCC 11170 / ATH 1.1.1 / DSM 467 / LMG 4362 / NCIMB 8255 / S1), this protein is Ferredoxin--NADP reductase.